A 129-amino-acid polypeptide reads, in one-letter code: Glycine cleavage system H protein (129 aa).

Residues 24–106 form the Lipoyl-binding domain; the sequence is TYTVGITEHA…YAGGWIFKIK (83 aa). At K65 the chain carries N6-lipoyllysine.

It belongs to the GcvH family. As to quaternary structure, the glycine cleavage system is composed of four proteins: P, T, L and H. It depends on (R)-lipoate as a cofactor.

The glycine cleavage system catalyzes the degradation of glycine. The H protein shuttles the methylamine group of glycine from the P protein to the T protein. The sequence is that of Glycine cleavage system H protein from Escherichia coli O7:K1 (strain IAI39 / ExPEC).